Here is a 408-residue protein sequence, read N- to C-terminus: Peptidase T (408 aa).

H78 is a Zn(2+) binding site. The active site involves D80. Position 140 (D140) interacts with Zn(2+). E174 (proton acceptor) is an active-site residue. 3 residues coordinate Zn(2+): E175, D197, and H379.

It belongs to the peptidase M20B family. It depends on Zn(2+) as a cofactor.

It is found in the cytoplasm. The catalysed reaction is Release of the N-terminal residue from a tripeptide.. In terms of biological role, cleaves the N-terminal amino acid of tripeptides. The sequence is that of Peptidase T from Staphylococcus aureus (strain Mu3 / ATCC 700698).